The chain runs to 394 residues: Trans-enoyl reductase fumoC (394 aa).

An NADP(+)-binding site is contributed by V62–K65. A152–M159 is a substrate binding site. NADP(+) is bound by residues S224 to S227, Y242, and L289 to D290. T309–F313 lines the substrate pocket. V378–K379 lines the NADP(+) pocket.

Belongs to the zinc-containing alcohol dehydrogenase family. As to quaternary structure, monomer.

It participates in secondary metabolite biosynthesis. Trans-enoyl reductase; part of the gene cluster that mediates the biosynthesis of fumosorinone, a 2-pyridone alkaloid that acts as an inhibitor of protein tyrosine phosphatase 1B which is implicated asa negative regulator of insulin receptor signaling and a potential drug target for the treatment of type II diabetes and other associated metabolic syndromes. The polyketide-amino acid backbone of fumosorinone is first assembled by the PKS-NRPS hybrid fumoS. The PKS modules condense one acetyl-CoA starter unit with 7 malonyl-CoA units, programmed C-methylations occurring after the first 3 and the sixth extensions, and cycles of full reduction occurring after the first 2 extensions. Because fumoS lacks a designated enoyl reductase (ER) domain, the required activity is provided the enoyl reductase fumoC. Upon formation of the polyketide backbone on the thiotemplate, the polyketide is transferred to the NRPS module and linked to tyrosine to produce the acyltetramic acid intermediate called prefumosorinone A. The cytochrome P450 monooxygenase fumoA then probably catalyzes an unprecedented oxidative ring expansion of prefumosorinone A to form prefumosorinone B which contains the 2-pyridone core of fumosorinone. The cytochrome P450 monooxygenase fumoB might hydroxylate the nitrogen of prefumosorinone B, but not the acyltetramic acid prefumosorinone A, to form fumosorinone. The protein is Trans-enoyl reductase fumoC of Cordyceps fumosorosea (strain ARSEF 2679) (Isaria fumosorosea).